The chain runs to 736 residues: Subtilisin-like protease SBT4.6 (736 aa).

Residues 1–24 (MATAVSYCLLSCIFALLVVSFASA) form the signal peptide. A propeptide spans 25 to 111 (GKDDQDKQVY…VFPSKNLNLQ (87 aa)) (activation peptide). One can recognise an Inhibitor I9 domain in the interval 33 to 110 (VYIVYMGALP…SVFPSKNLNL (78 aa)). Positions 115 to 589 (SWNFMGLKEG…AGHVDPIAAI (475 aa)) constitute a Peptidase S8 domain. Asp143 functions as the Charge relay system in the catalytic mechanism. N-linked (GlcNAc...) asparagine glycosylation is present at Asn174. The active-site Charge relay system is His204. Asn227 carries an N-linked (GlcNAc...) asparagine glycan. One can recognise a PA domain in the interval 362-442 (KYPLVYGKSA…PVSVLSEDDY (81 aa)). Asn450 carries N-linked (GlcNAc...) asparagine glycosylation. Ser527 (charge relay system) is an active-site residue. Asn564, Asn598, Asn610, and Asn668 each carry an N-linked (GlcNAc...) asparagine glycan.

Belongs to the peptidase S8 family. Post-translationally, the C-terminal propeptide is autocleaved.

The protein resides in the secreted. The chain is Subtilisin-like protease SBT4.6 from Arabidopsis thaliana (Mouse-ear cress).